A 305-amino-acid polypeptide reads, in one-letter code: Elongation factor Ts (305 aa).

The tract at residues 79–82 (TDFV) is involved in Mg(2+) ion dislocation from EF-Tu.

It belongs to the EF-Ts family.

It is found in the cytoplasm. In terms of biological role, associates with the EF-Tu.GDP complex and induces the exchange of GDP to GTP. It remains bound to the aminoacyl-tRNA.EF-Tu.GTP complex up to the GTP hydrolysis stage on the ribosome. The polypeptide is Elongation factor Ts (Brucella suis biovar 1 (strain 1330)).